A 212-amino-acid chain; its full sequence is Protein Thf1 (212 aa).

Positions 179–201 form a coiled coil; the sequence is ERMEQAVELMQETLAADRRKKEK.

This sequence belongs to the THF1 family.

In terms of biological role, may be involved in photosynthetic membrane biogenesis. This Parasynechococcus marenigrum (strain WH8102) protein is Protein Thf1.